Here is a 363-residue protein sequence, read N- to C-terminus: 3-isopropylmalate dehydrogenase (363 aa).

NAD(+) is bound at residue 79–92; that stretch reads GPKWEHLPPNDQPE. Residues Arg-100, Arg-110, Arg-139, and Asp-228 each contribute to the substrate site. Positions 228, 252, and 256 each coordinate Mg(2+). Position 286–298 (286–298) interacts with NAD(+); it reads GSAPDIAGKNIAN.

This sequence belongs to the isocitrate and isopropylmalate dehydrogenases family. LeuB type 1 subfamily. Homodimer. Mg(2+) serves as cofactor. Mn(2+) is required as a cofactor.

The protein resides in the cytoplasm. It catalyses the reaction (2R,3S)-3-isopropylmalate + NAD(+) = 4-methyl-2-oxopentanoate + CO2 + NADH. It functions in the pathway amino-acid biosynthesis; L-leucine biosynthesis; L-leucine from 3-methyl-2-oxobutanoate: step 3/4. Catalyzes the oxidation of 3-carboxy-2-hydroxy-4-methylpentanoate (3-isopropylmalate) to 3-carboxy-4-methyl-2-oxopentanoate. The product decarboxylates to 4-methyl-2 oxopentanoate. This Aliivibrio fischeri (strain ATCC 700601 / ES114) (Vibrio fischeri) protein is 3-isopropylmalate dehydrogenase.